Reading from the N-terminus, the 934-residue chain is Progesterone receptor (934 aa).

Positions 1–49 are disordered; it reads MTELKSKGPRAPHVAGGPPSPEVGSPLLCRPAAGPFQGSQTSDTLPEVS. The AF3; mediates transcriptional activation stretch occupies residues 1–164; it reads MTELKSKGPR…PATQRVLSPL (164 aa). The segment at 1–567 is modulating, Pro-Rich; it reads MTELKSKGPR…YSFESLPQKI (567 aa). Residue Ser20 is modified to Phosphoserine. The short motif at 55-59 is the LXXL motif 1 element; the sequence is LDGLL. Residues 61–239 are disordered; sequence PRLCQGQDPP…EDSAGPLLKG (179 aa). Ser81 is subject to Phosphoserine. The LXXL motif 2 motif lies at 115 to 119; sequence LDTLL. Ser130 and Ser162 each carry phosphoserine. Residues 165–305 are mediates transcriptional transrepression; it reads MSRSGGKTED…LATTMMDFIH (141 aa). Residues 183–187 carry the Nuclear localization signal motif; the sequence is KVLPR. Ser190 is subject to Phosphoserine. A compositionally biased stretch (polar residues) spans 191 to 203; that stretch reads PSRQLLLPTSGSP. Ser213 is modified (phosphoserine). Positions 220–231 are enriched in acidic residues; that stretch reads EVEEEDGSESED. Ser294 carries the post-translational modification Phosphoserine; by MAPK1. The segment at 331-375 is disordered; it reads GGAGAASAFAPPQSSPSASSTPVAVGDFPDCAYPPDAEPKDNAYP. The span at 335 to 350 shows a compositional bias: low complexity; it reads AASAFAPPQSSPSASS. Ser345 carries the phosphoserine; by MAPK modification. Lys388 participates in a covalent cross-link: Glycyl lysine isopeptide (Lys-Gly) (interchain with G-Cter in SUMO); alternate. Lys388 is covalently cross-linked (Glycyl lysine isopeptide (Lys-Gly) (interchain with G-Cter in ubiquitin); alternate). Residue Ser400 is modified to Phosphoserine; by CDK2. Residues 415 to 454 form a disordered region; that stretch reads PDFPLGPPPQLPPRAPPSRPGEAAVTAAPASASVSSASSP. Residues 418 to 433 are compositionally biased toward pro residues; the sequence is PLGPPPQLPPRAPPSR. Residues 434–454 are compositionally biased toward low complexity; sequence PGEAAVTAAPASASVSSASSP. The AF1; mediates transcriptional activation stretch occupies residues 456–547; the sequence is STLECILYKA…VYPPYLNYLR (92 aa). Lys532 is covalently cross-linked (Glycyl lysine isopeptide (Lys-Gly) (interchain with G-Cter in SUMO)). 2 consecutive NR C4-type zinc fingers follow at residues 568-588 and 604-628; these read CLICGDEASGCHYGVLTCGSC and CAGRNDCIVDKIRRKNCPACRLRKC. A DNA-binding region (nuclear receptor) is located at residues 568–640; that stretch reads CLICGDEASG…AGMVLGGRKF (73 aa). Residue Ser677 is modified to Phosphoserine. Positions 680–914 constitute an NR LBD domain; sequence QDIQLIPPLI…EFPEMMSEVI (235 aa). The tract at residues 688–934 is AF2; mediates transcriptional activation; it reads LIKLLMSIEP…MVKPLLFHKK (247 aa). Arg767 provides a ligand contact to progesterone.

It belongs to the nuclear hormone receptor family. In terms of assembly, interacts with SMARD1 and UNC45A. Interacts with CUEDC2; the interaction promotes ubiquitination, decreases sumoylation, and represses transcriptional activity. Interacts with PIAS3; the interaction promotes sumoylation of PR in a hormone-dependent manner, inhibits DNA-binding, and alters nuclear export. Interacts with SP1; the interaction requires ligand-induced phosphorylation on Ser-345 by ERK1/2-MAPK. Interacts with PRMT2. Interacts with NCOA2 and NCOA1. Interacts with KLF9. Interacts with GTF2B. Phosphorylated on multiple serine sites. Several of these sites are hormone-dependent. Phosphorylation on Ser-294 is highly hormone-dependent and modulates ubiquitination and sumoylation on Lys-388. Phosphorylation on Ser-345 also requires induction by hormone. Basal phosphorylation on Ser-81, Ser-162, Ser-190 and Ser-400 is increased in response to progesterone and can be phosphorylated in vitro by the CDK2-A1 complex. Increased levels of phosphorylation on Ser-400 also in the presence of EGF, heregulin, IGF, PMA and FBS. Phosphorylation at this site by CDK2 is ligand-independent, and increases nuclear translocation and transcriptional activity. Phosphorylation at Ser-162 and Ser-294, but not at Ser-190, is impaired during the G(2)/M phase of the cell cycle. Phosphorylation on Ser-345 by ERK1/2 MAPK is required for interaction with SP1. In terms of processing, sumoylation is hormone-dependent and represses transcriptional activity. Sumoylation on all three sites is enhanced by PIAS3. Desumoylated by SENP1. Sumoylation on Lys-388, the main site of sumoylation, is repressed by ubiquitination on the same site, and modulated by phosphorylation at Ser-294. Post-translationally, ubiquitination is hormone-dependent and represses sumoylation on the same site. Promoted by MAPK-mediated phosphorylation on Ser-294. Ubiquitinated by UBR5, leading to its degradation: UBR5 specifically recognizes and binds ligand-bound PGR when it is not associated with coactivators (NCOAs). In presence of NCOAs, the UBR5-degron is not accessible, preventing its ubiquitination and degradation. Palmitoylated by ZDHHC7 and ZDHHC21. Palmitoylation is required for plasma membrane targeting and for rapid intracellular signaling via ERK and AKT kinases and cAMP generation.

It is found in the nucleus. The protein localises to the cytoplasm. The steroid hormones and their receptors are involved in the regulation of eukaryotic gene expression and affect cellular proliferation and differentiation in target tissues. Transcriptional activator of several progesteron-dependent promoters in a variety of cell types. Involved in activation of SRC-dependent MAPK signaling on hormone stimulation. This chain is Progesterone receptor (PGR), found in Colobus guereza (Mantled guereza).